Consider the following 307-residue polypeptide: Elongation factor Ts (307 aa).

An involved in Mg(2+) ion dislocation from EF-Tu region spans residues 80 to 83; the sequence is TDFV.

Belongs to the EF-Ts family.

The protein localises to the cytoplasm. Functionally, associates with the EF-Tu.GDP complex and induces the exchange of GDP to GTP. It remains bound to the aminoacyl-tRNA.EF-Tu.GTP complex up to the GTP hydrolysis stage on the ribosome. This is Elongation factor Ts from Bradyrhizobium diazoefficiens (strain JCM 10833 / BCRC 13528 / IAM 13628 / NBRC 14792 / USDA 110).